A 191-amino-acid chain; its full sequence is Small ribosomal subunit protein eS7z (191 aa).

N-acetylmethionine is present on methionine 1. The stretch at 15 to 50 forms a coiled coil; it reads ELSELDEQVAQAFFDLENTNQELKSELKDLYVNSAV.

It belongs to the eukaryotic ribosomal protein eS7 family.

This is Small ribosomal subunit protein eS7z (RPS7A) from Arabidopsis thaliana (Mouse-ear cress).